Consider the following 326-residue polypeptide: MRVLVVGGTGTLGRQIVRQAIDQGHTVVCLVRSLRKAAFLKEWGATIVGGNICKPETLSPALENIDAVIDASTARATDSLTIRQVDWEGKLNLIRAVQKAGIKKFVFFSILRAAEYPKVPLMDIKNCTEKFLAQTNLDYTILQLAGFMQGLIGQYAIPILDNQSVWQTGENTPIAYMNTQDVAKFAVRAVELDSVARKTYPVVGSRAWGATEIIQLCERMSGNNARISQVPMAVLRFMRSFTRFFQWTYNASDRLAFSEVLASGKALTADMAPVYEQFGLDPKETTTLESYLQEYFGRIIKKLKELDYEVNPTQTEGKKKKNNFFF.

This sequence belongs to the NmrA-type oxidoreductase family. Ycf39 subfamily. In terms of assembly, purified in several chlorophyll- and carotenoid-containing complexes, including photosystem II (PSII) assembly intermediate complex RCII* (iD1, D1, D2, PsbE, PsbF, PsbI, Ycf39, Ycf48, HliC and HliD) and the Ycf39-Hlip complex (Ycf39, HliC, HliD and pigments). Tagged protein does not pull down mature PSII.

It localises to the cellular thylakoid membrane. Its function is as follows. Requires HliD to bind pigments. The Ycf39-Hlip complex binds D1 at an early stage of PSII assembly along with Ycf48, ribosomes and ChlG, the last enzyme in chlorophyll biosynthesis; it may be involved in chlorophyll reuse and delivery to D1 in the initial stages of PSII assembly. The Ycf39-Hlip complex efficiently quenches chlorophyll fluorescence, contributing to photoprotection. The polypeptide is Photosystem II assembly factor Ycf39 (Synechocystis sp. (strain ATCC 27184 / PCC 6803 / Kazusa)).